The chain runs to 137 residues: Small ribosomal subunit protein uS9 (137 aa).

Belongs to the universal ribosomal protein uS9 family.

This is Small ribosomal subunit protein uS9 from Picosynechococcus sp. (strain ATCC 27264 / PCC 7002 / PR-6) (Agmenellum quadruplicatum).